A 368-amino-acid polypeptide reads, in one-letter code: MFYWLIDLSNTVPGLGIFKPLLNVFRYITFRTGGAVVTGALFVFLFGPWIIDNLRLRQGKGQPIRADGPQSHLVSKKGTPTMGGLMILSGLVVSTVLWANPLNPYVWIVLAVTLGFGLIGFYDDYLKVTKQTHAGFSGRTRLLLELLIALAACYALTRLGREPFSTALVIPFFKDVALDLGWFFLGFGAFIIVGAGNAVNLTDGLDGLAIVPVMIAAASFAMIAYLAGNAVFADYLQINYIAGAGELAVLCGAVLGAGLGFLWFNAPPASIFMGDTGSLALGGMLGSIAVAVKHEIVLAVIGGLFVLEAVSVIVQVASFKLTGKRIFKMAPIHHHFEQLGWTEPQIVIRFWIISVMLALAGLSTLKLR.

10 helical membrane passes run 32-52 (TGGA…WIID), 79-99 (TPTM…VLWA), 102-122 (LNPY…IGFY), 142-160 (LLLE…TRLG), 176-196 (VALD…VGAG), 207-227 (GLAI…AYLA), 244-264 (AGEL…FLWF), 271-291 (IFMG…IAVA), 296-316 (IVLA…IVQV), and 345-365 (QIVI…LSTL).

Belongs to the glycosyltransferase 4 family. MraY subfamily. The cofactor is Mg(2+).

Its subcellular location is the cell inner membrane. The catalysed reaction is UDP-N-acetyl-alpha-D-muramoyl-L-alanyl-gamma-D-glutamyl-meso-2,6-diaminopimeloyl-D-alanyl-D-alanine + di-trans,octa-cis-undecaprenyl phosphate = di-trans,octa-cis-undecaprenyl diphospho-N-acetyl-alpha-D-muramoyl-L-alanyl-D-glutamyl-meso-2,6-diaminopimeloyl-D-alanyl-D-alanine + UMP. Its pathway is cell wall biogenesis; peptidoglycan biosynthesis. Catalyzes the initial step of the lipid cycle reactions in the biosynthesis of the cell wall peptidoglycan: transfers peptidoglycan precursor phospho-MurNAc-pentapeptide from UDP-MurNAc-pentapeptide onto the lipid carrier undecaprenyl phosphate, yielding undecaprenyl-pyrophosphoryl-MurNAc-pentapeptide, known as lipid I. The chain is Phospho-N-acetylmuramoyl-pentapeptide-transferase from Nitrobacter winogradskyi (strain ATCC 25391 / DSM 10237 / CIP 104748 / NCIMB 11846 / Nb-255).